The following is a 205-amino-acid chain: Ras-related protein Rab-1A (205 aa).

N-acetylserine is present on serine 2. 8 residues coordinate GTP: serine 20, glycine 21, glycine 23, lysine 24, serine 25, cysteine 26, glutamate 38, and threonine 43. Mg(2+) is bound at residue serine 25. Residues 34-48 (DTYTESYISTIGVDF) carry the Switch 1 motif. Threonine 43 lines the Mg(2+) pocket. Residues lysine 49 and lysine 61 each participate in a glycyl lysine isopeptide (Lys-Gly) (interchain with G-Cter in ubiquitin) cross-link. Aspartate 66 contributes to the Mg(2+) binding site. The Switch 2 signature appears at 66–83 (DTAGQERFRTITSSYYRG). The GTP site is built by glycine 69, asparagine 124, lysine 125, aspartate 127, alanine 155, and lysine 156. Residues 178–205 (PGATAGGAEKSNVKIQSTPVKQSGGGCC) are disordered. Position 194 is a phosphoserine; by CDK1 (serine 194). Residues cysteine 204 and cysteine 205 are each lipidated (S-geranylgeranyl cysteine).

This sequence belongs to the small GTPase superfamily. Rab family. As to quaternary structure, may interact with YIPF5. Interacts with C9orf72; the interaction mediates recruitment of RAB1A to the ATG1/ULK1 kinase complex. Interacts with GDI1; this promotes dissociation from membranes. The cofactor is Mg(2+). Phosphorylated by CDK1 kinase during mitosis. In terms of processing, ubiquitinated via 'Lys-11'-linked ubiquitination on Lys-49 and Lys-61; impairing the recruitment of guanosine diphosphate (GDP) dissociation inhibitor 1/GDI1.

The protein resides in the golgi apparatus. The protein localises to the endoplasmic reticulum. Its subcellular location is the early endosome. It localises to the cytoplasm. It is found in the cytosol. The protein resides in the membrane. The protein localises to the melanosome. It catalyses the reaction GTP + H2O = GDP + phosphate + H(+). Its activity is regulated as follows. Regulated by guanine nucleotide exchange factors (GEFs) which promote the exchange of bound GDP for free GTP. Regulated by GTPase activating proteins (GAPs) which increase the GTP hydrolysis activity. Inhibited by GDP dissociation inhibitors (GDIs). In terms of biological role, the small GTPases Rab are key regulators of intracellular membrane trafficking, from the formation of transport vesicles to their fusion with membranes. Rabs cycle between an inactive GDP-bound form and an active GTP-bound form that is able to recruit to membranes different sets of downstream effectors directly responsible for vesicle formation, movement, tethering and fusion. RAB1A regulates vesicular protein transport from the endoplasmic reticulum (ER) to the Golgi compartment and on to the cell surface, and plays a role in IL-8 and growth hormone secretion. Required to modulate the compacted morphology of the Golgi. Regulates the level of CASR present at the cell membrane. Plays a role in cell adhesion and cell migration, via its role in protein trafficking. Plays a role in autophagosome assembly and cellular defense reactions against pathogenic bacteria. Plays a role in microtubule-dependent protein transport by early endosomes and in anterograde melanosome transport. The sequence is that of Ras-related protein Rab-1A (RAB1A) from Sus scrofa (Pig).